The sequence spans 196 residues: Endoribonuclease YbeY (196 aa).

Residues His120, His124, and His130 each contribute to the Zn(2+) site.

This sequence belongs to the endoribonuclease YbeY family. Zn(2+) serves as cofactor.

The protein resides in the cytoplasm. In terms of biological role, single strand-specific metallo-endoribonuclease involved in late-stage 70S ribosome quality control and in maturation of the 3' terminus of the 16S rRNA. This chain is Endoribonuclease YbeY, found in Corynebacterium glutamicum (strain R).